The primary structure comprises 132 residues: Small ribosomal subunit protein uS8 (132 aa).

Belongs to the universal ribosomal protein uS8 family. Part of the 30S ribosomal subunit. Contacts proteins S5 and S12.

In terms of biological role, one of the primary rRNA binding proteins, it binds directly to 16S rRNA central domain where it helps coordinate assembly of the platform of the 30S subunit. This chain is Small ribosomal subunit protein uS8, found in Bifidobacterium adolescentis (strain ATCC 15703 / DSM 20083 / NCTC 11814 / E194a).